The primary structure comprises 206 residues: Transmembrane emp24 domain-containing protein bai (206 aa).

Positions 1 to 20 (MARAALIVCLLMACAWSSHA) are cleaved as a signal peptide. The Lumenal segment spans residues 21–172 (VMFKLSPNTQ…RDTNEKTNSR (152 aa)). The GOLD domain maps to 30 to 140 (QKCLKEDIQA…LKPLEVDLKR (111 aa)). A helical membrane pass occupies residues 173-193 (VLFFSIFSMCCLLGLATWQVL). Residues 194–206 (YLRRYFKAKKLIE) lie on the Cytoplasmic side of the membrane.

It belongs to the EMP24/GP25L family.

It is found in the membrane. In terms of biological role, eca and bai are essential, though not redundant, for dorsoventral patterning of the embryo. Specifically required during early embryogenesis for the activity of maternal tkv, while the zygotic tkv is not affected. This chain is Transmembrane emp24 domain-containing protein bai, found in Drosophila erecta (Fruit fly).